The chain runs to 266 residues: 15-hydroxyprostaglandin dehydrogenase [NAD(+)] (266 aa).

Residues 12–20, 36–37, 63–65, and asparagine 91 each bind NAD(+); these read GAAQGIGRA, DW, and CDV. Substrate-binding residues include serine 138 and glutamine 148. The Proton acceptor role is filled by tyrosine 151. Residues 151–155 and 186–188 contribute to the NAD(+) site; these read YCASK and VNT.

This sequence belongs to the short-chain dehydrogenases/reductases (SDR) family. Homodimer.

The protein resides in the cytoplasm. It carries out the reaction prostaglandin E2 + NAD(+) = 15-oxoprostaglandin E2 + NADH + H(+). It catalyses the reaction (15S)-hydroxy-(5Z,8Z,11Z,13E)-eicosatetraenoate + NAD(+) = 15-oxo-(5Z,8Z,11Z,13E)-eicosatetraenoate + NADH + H(+). The enzyme catalyses (11R)-hydroxy-(5Z,8Z,12E,14Z)-eicosatetraenoate + NAD(+) = 11-oxo-(5Z,8Z,12E,14Z)-eicosatetraenoate + NADH + H(+). The catalysed reaction is lipoxin A4 + NAD(+) = 15-oxo-(5S,6R)-dihydroxy-(7E,9E,11Z,13E)-eicosatetraenoate + NADH + H(+). It carries out the reaction 15-oxo-(5S,6R)-dihydroxy-(7E,9E,11Z)-eicosatrienoate + NADH + H(+) = (5S,6R,15S)-trihydroxy-(7E,9E,11Z)-eicosatrienoate + NAD(+). It catalyses the reaction prostaglandin A1 + NAD(+) = 15-oxo-prostaglandin A1 + NADH + H(+). The enzyme catalyses prostaglandin E1 + NAD(+) = 15-oxoprostaglandin E1 + NADH + H(+). The catalysed reaction is 14-hydroxy-(4Z,7Z,10Z,12E,16Z,19Z)-docosahexaenoate + NAD(+) = 14-oxo-(4Z,7Z,10Z,12E,16Z,19Z)-docosahexaenoate + NADH + H(+). It carries out the reaction resolvin E1 + NAD(+) = 18-oxo-resolvin E1 + NADH + H(+). It catalyses the reaction resolvin D1 + NAD(+) = 8-oxoresolvin D1 + NADH + H(+). The enzyme catalyses resolvin D1 + NAD(+) = 17-oxoresolvin D1 + NADH + H(+). The catalysed reaction is resolvin D2 + NAD(+) = 7-oxoresolvin D2 + NADH + H(+). It carries out the reaction resolvin D2 + NAD(+) = 16-oxoresolvin D2 + NADH + H(+). In terms of biological role, catalyzes the NAD-dependent dehydrogenation (oxidation) of a broad array of hydroxylated polyunsaturated fatty acids (mainly eicosanoids and docosanoids, including prostaglandins, lipoxins and resolvins), yielding their corresponding keto (oxo) metabolites. Decreases the levels of the pro-proliferative prostaglandins such as prostaglandin E2 (whose activity is increased in cancer because of an increase in the expression of cyclooxygenase 2) and generates oxo-fatty acid products that can profoundly influence cell function by abrogating pro-inflammatory cytokine expression. Converts resolvins E1, D1 and D2 to their oxo products, which represents a mode of resolvin inactivation. Resolvin E1 plays important roles during the resolution phase of acute inflammation, while resolvins D1 and D2 have a unique role in obesity-induced adipose inflammation. This is 15-hydroxyprostaglandin dehydrogenase [NAD(+)] (HPGD) from Macaca fascicularis (Crab-eating macaque).